The sequence spans 213 residues: Cytochrome b-c1 complex subunit Rieske, mitochondrial (213 aa).

The N-terminal 29 residues, 1 to 29, are a transit peptide targeting the mitochondrion; sequence MSSLAFRTLRNGLGLKSSVRALSTTTTTL. The Mitochondrial matrix portion of the chain corresponds to 30–47; the sequence is SNYQQPDYSSYLNNKSGQ. Residues 48–77 form a helical membrane-spanning segment; it reads GSRNFTYFMVGSMGLLSAAGAKSTVEAFLS. Topologically, residues 78–213 are mitochondrial intermembrane; sequence SFAASADVLA…FTDDETLLVG (136 aa). Positions 116–211 constitute a Rieske domain; it reads RHRTADEIEE…YDFTDDETLL (96 aa). [2Fe-2S] cluster-binding residues include cysteine 156, histidine 158, cysteine 175, and histidine 178. Cysteine 161 and cysteine 177 form a disulfide bridge.

It belongs to the Rieske iron-sulfur protein family. As to quaternary structure, component of the ubiquinol-cytochrome c oxidoreductase (cytochrome b-c1 complex, complex III, CIII), a multisubunit enzyme composed of 10 subunits. The complex is composed of 3 respiratory subunits cytochrome b (COB), cytochrome c1 (CYT1) and Rieske protein (RIP1), 2 core protein subunits COR1 and QCR2, and 5 low-molecular weight protein subunits QCR6, QCR7, QCR8, QCR9 and QCR10. The complex exists as an obligatory dimer and forms supercomplexes (SCs) in the inner mitochondrial membrane with a monomer or a dimer of cytochrome c oxidase (complex IV, CIV), resulting in 2 different assemblies (supercomplexes III(2)IV and III(2)IV(2)). [2Fe-2S] cluster serves as cofactor.

Its subcellular location is the mitochondrion inner membrane. The catalysed reaction is a quinol + 2 Fe(III)-[cytochrome c](out) = a quinone + 2 Fe(II)-[cytochrome c](out) + 2 H(+)(out). In terms of biological role, component of the ubiquinol-cytochrome c oxidoreductase, a multisubunit transmembrane complex that is part of the mitochondrial electron transport chain which drives oxidative phosphorylation. The complex plays an important role in the uptake of multiple carbon sources present in different host niches. The polypeptide is Cytochrome b-c1 complex subunit Rieske, mitochondrial (Candida albicans (strain SC5314 / ATCC MYA-2876) (Yeast)).